Consider the following 404-residue polypeptide: Formate-dependent phosphoribosylglycinamide formyltransferase (404 aa).

N(1)-(5-phospho-beta-D-ribosyl)glycinamide-binding positions include 25-26 (EL) and Glu-85. ATP-binding positions include Arg-118, Lys-159, 164 to 169 (SSGKGQ), 199 to 202 (EGFI), and Glu-207. In terms of domain architecture, ATP-grasp spans 123 to 318 (RLAAEELGLA…EFELHARAIL (196 aa)). Positions 277 and 289 each coordinate Mg(2+). N(1)-(5-phospho-beta-D-ribosyl)glycinamide contacts are provided by residues Asp-296, Lys-365, and 372–373 (RR).

It belongs to the PurK/PurT family. As to quaternary structure, homodimer.

It carries out the reaction N(1)-(5-phospho-beta-D-ribosyl)glycinamide + formate + ATP = N(2)-formyl-N(1)-(5-phospho-beta-D-ribosyl)glycinamide + ADP + phosphate + H(+). It functions in the pathway purine metabolism; IMP biosynthesis via de novo pathway; N(2)-formyl-N(1)-(5-phospho-D-ribosyl)glycinamide from N(1)-(5-phospho-D-ribosyl)glycinamide (formate route): step 1/1. Involved in the de novo purine biosynthesis. Catalyzes the transfer of formate to 5-phospho-ribosyl-glycinamide (GAR), producing 5-phospho-ribosyl-N-formylglycinamide (FGAR). Formate is provided by PurU via hydrolysis of 10-formyl-tetrahydrofolate. The sequence is that of Formate-dependent phosphoribosylglycinamide formyltransferase from Burkholderia vietnamiensis (strain G4 / LMG 22486) (Burkholderia cepacia (strain R1808)).